The sequence spans 878 residues: Valine--tRNA ligase (878 aa).

A 'HIGH' region motif is present at residues 45–55 (PNVTGQLHMGH). The 'KMSKS' region signature appears at 524-528 (KMSKS). K527 lines the ATP pocket. Residues 804–871 (PLKDLIDLEK…REKEVLEQRI (68 aa)) adopt a coiled-coil conformation.

The protein belongs to the class-I aminoacyl-tRNA synthetase family. ValS type 1 subfamily. In terms of assembly, monomer.

The protein localises to the cytoplasm. The catalysed reaction is tRNA(Val) + L-valine + ATP = L-valyl-tRNA(Val) + AMP + diphosphate. In terms of biological role, catalyzes the attachment of valine to tRNA(Val). As ValRS can inadvertently accommodate and process structurally similar amino acids such as threonine, to avoid such errors, it has a 'posttransfer' editing activity that hydrolyzes mischarged Thr-tRNA(Val) in a tRNA-dependent manner. The polypeptide is Valine--tRNA ligase (Carboxydothermus hydrogenoformans (strain ATCC BAA-161 / DSM 6008 / Z-2901)).